The following is a 321-amino-acid chain: Coproporphyrin III ferrochelatase (321 aa).

2 residues coordinate Fe(2+): His185 and Glu267.

This sequence belongs to the ferrochelatase family.

The protein resides in the cytoplasm. The catalysed reaction is Fe-coproporphyrin III + 2 H(+) = coproporphyrin III + Fe(2+). The protein operates within porphyrin-containing compound metabolism; protoheme biosynthesis. Its function is as follows. Involved in coproporphyrin-dependent heme b biosynthesis. Catalyzes the insertion of ferrous iron into coproporphyrin III to form Fe-coproporphyrin III. This is Coproporphyrin III ferrochelatase from Lacticaseibacillus casei (strain BL23) (Lactobacillus casei).